Consider the following 631-residue polypeptide: Translation factor GUF1, mitochondrial (631 aa).

A mitochondrion-targeting transit peptide spans 1-19; the sequence is MFNRRLLRHVRYAFQQVRS. The 182-residue stretch at 33-214 folds into the tr-type G domain; the sequence is ERYRNFSIVA…AIVDRIPPPT (182 aa). GTP contacts are provided by residues 42 to 49, 107 to 111, and 161 to 164; these read AHVDHGKS, DTPGH, and NKID.

The protein belongs to the TRAFAC class translation factor GTPase superfamily. Classic translation factor GTPase family. LepA subfamily.

The protein resides in the mitochondrion inner membrane. It catalyses the reaction GTP + H2O = GDP + phosphate + H(+). Functionally, promotes mitochondrial protein synthesis. May act as a fidelity factor of the translation reaction, by catalyzing a one-codon backward translocation of tRNAs on improperly translocated ribosomes. Binds to mitochondrial ribosomes in a GTP-dependent manner. This Kluyveromyces lactis (strain ATCC 8585 / CBS 2359 / DSM 70799 / NBRC 1267 / NRRL Y-1140 / WM37) (Yeast) protein is Translation factor GUF1, mitochondrial.